An 874-amino-acid polypeptide reads, in one-letter code: Alanine--tRNA ligase (874 aa).

The Zn(2+) site is built by H564, H568, C665, and H669.

This sequence belongs to the class-II aminoacyl-tRNA synthetase family. Zn(2+) serves as cofactor.

The protein localises to the cytoplasm. The enzyme catalyses tRNA(Ala) + L-alanine + ATP = L-alanyl-tRNA(Ala) + AMP + diphosphate. Catalyzes the attachment of alanine to tRNA(Ala) in a two-step reaction: alanine is first activated by ATP to form Ala-AMP and then transferred to the acceptor end of tRNA(Ala). Also edits incorrectly charged Ser-tRNA(Ala) and Gly-tRNA(Ala) via its editing domain. The sequence is that of Alanine--tRNA ligase from Cupriavidus metallidurans (strain ATCC 43123 / DSM 2839 / NBRC 102507 / CH34) (Ralstonia metallidurans).